We begin with the raw amino-acid sequence, 224 residues long: Putative adhesin RF_1314 (224 aa).

The signal sequence occupies residues 1–22 (MKKLLLIAATSATILSSSISFA).

In Rickettsia felis (strain ATCC VR-1525 / URRWXCal2) (Rickettsia azadi), this protein is Putative adhesin RF_1314.